We begin with the raw amino-acid sequence, 450 residues long: Regulator of sigma E protease (450 aa).

His-22 lines the Zn(2+) pocket. The active site involves Glu-23. Position 26 (His-26) interacts with Zn(2+). The helical transmembrane segment at 98-120 (AAIIAAGPVANFIFAIFAYWLVF) threads the bilayer. PDZ domains lie at 115-186 (AYWL…APFG) and 199-291 (HWAF…TPDT). 2 helical membrane passes run 376–398 (VIYY…LFPL) and 426–445 (FSYR…ALFN).

This sequence belongs to the peptidase M50B family. As to quaternary structure, interacts with RseA. Requires Zn(2+) as cofactor.

It is found in the cell inner membrane. Its function is as follows. A site-2 regulated intramembrane protease (S2P) that cleaves the peptide bond between 'Ala-108' and 'Cys-109' in the transmembrane region of RseA. Part of a regulated intramembrane proteolysis (RIP) cascade. Acts on DegS-cleaved RseA to release the cytoplasmic domain of RseA. This provides the cell with sigma-E (RpoE) activity through the proteolysis of RseA. This Salmonella typhi protein is Regulator of sigma E protease (rseP).